Consider the following 182-residue polypeptide: Cytidylate kinase (182 aa).

Residue 7-15 (GPPGSGKSS) participates in ATP binding.

It belongs to the cytidylate kinase family. Type 2 subfamily.

It is found in the cytoplasm. The enzyme catalyses CMP + ATP = CDP + ADP. It catalyses the reaction dCMP + ATP = dCDP + ADP. This Sulfolobus acidocaldarius (strain ATCC 33909 / DSM 639 / JCM 8929 / NBRC 15157 / NCIMB 11770) protein is Cytidylate kinase (cmk).